The primary structure comprises 235 residues: Proteasome subunit alpha type-2 (235 aa).

The protein belongs to the peptidase T1A family. The 26S proteasome consists of a 20S proteasome core and two 19S regulatory subunits. The 20S proteasome core is composed of 28 subunits that are arranged in four stacked rings, resulting in a barrel-shaped structure. The two end rings are each formed by seven alpha subunits, and the two central rings are each formed by seven beta subunits. The catalytic chamber with the active sites is on the inside of the barrel.

Its subcellular location is the cytoplasm. It localises to the nucleus. Functionally, the proteasome is a multicatalytic proteinase complex which is characterized by its ability to cleave peptides with Arg, Phe, Tyr, Leu, and Glu adjacent to the leaving group at neutral or slightly basic pH. The proteasome has an ATP-dependent proteolytic activity. This chain is Proteasome subunit alpha type-2 (PAB1), found in Oryza sativa subsp. indica (Rice).